Here is a 384-residue protein sequence, read N- to C-terminus: Bifunctional enzyme IspD/IspF (384 aa).

2-C-methyl-D-erythritol 4-phosphate cytidylyltransferase stretches follow at residues 1–227 (MAKV…EGEQ) and 1–228 (MAKV…GEQR). A 2-C-methyl-D-erythritol 2,4-cyclodiphosphate synthase region spans residues 228–384 (RIGSGFDVHR…QATALITLPF (157 aa)). A divalent metal cation is bound by residues aspartate 234 and histidine 236. Residues 234–236 (DVH) and 260–261 (HS) contribute to the 4-CDP-2-C-methyl-D-erythritol 2-phosphate site. Histidine 268 provides a ligand contact to a divalent metal cation. 4-CDP-2-C-methyl-D-erythritol 2-phosphate-binding positions include 282–284 (DIG), 358–361 (TTTE), phenylalanine 365, and arginine 368.

It in the N-terminal section; belongs to the IspD/TarI cytidylyltransferase family. IspD subfamily. In the C-terminal section; belongs to the IspF family. It depends on a divalent metal cation as a cofactor.

It carries out the reaction 2-C-methyl-D-erythritol 4-phosphate + CTP + H(+) = 4-CDP-2-C-methyl-D-erythritol + diphosphate. The enzyme catalyses 4-CDP-2-C-methyl-D-erythritol 2-phosphate = 2-C-methyl-D-erythritol 2,4-cyclic diphosphate + CMP. The protein operates within isoprenoid biosynthesis; isopentenyl diphosphate biosynthesis via DXP pathway; isopentenyl diphosphate from 1-deoxy-D-xylulose 5-phosphate: step 2/6. It functions in the pathway isoprenoid biosynthesis; isopentenyl diphosphate biosynthesis via DXP pathway; isopentenyl diphosphate from 1-deoxy-D-xylulose 5-phosphate: step 4/6. Its function is as follows. Bifunctional enzyme that catalyzes the formation of 4-diphosphocytidyl-2-C-methyl-D-erythritol from CTP and 2-C-methyl-D-erythritol 4-phosphate (MEP) (IspD), and catalyzes the conversion of 4-diphosphocytidyl-2-C-methyl-D-erythritol 2-phosphate (CDP-ME2P) to 2-C-methyl-D-erythritol 2,4-cyclodiphosphate (ME-CPP) with a corresponding release of cytidine 5-monophosphate (CMP) (IspF). This Rhodospirillum rubrum (strain ATCC 11170 / ATH 1.1.1 / DSM 467 / LMG 4362 / NCIMB 8255 / S1) protein is Bifunctional enzyme IspD/IspF.